Reading from the N-terminus, the 584-residue chain is Poly(A) RNA polymerase protein 2 (584 aa).

Residues 1 to 11 show a composition bias toward polar residues; it reads MGAKSVTASSS. Disordered stretches follow at residues 1-63 and 81-147; these read MGAK…LPKD and EGFD…QELE. Basic residues predominate over residues 12-35; it reads KKIKNRHNGKVKKSKKIKKVRKPQ. Residues 53-63 show a composition bias toward basic and acidic residues; sequence NEQETNKLPKD. Acidic residues predominate over residues 130-139; it reads SEDEQAEQEE. Mg(2+)-binding residues include Asp236 and Asp238. ATP contacts are provided by Gly301, Lys326, Asn431, and Arg435. The 61-residue stretch at 371-431 folds into the PAP-associated domain; the sequence is NLGVLLIEFF…AIQDPGDESN (61 aa). A disordered region spans residues 525–584; the sequence is TSTATATTTDDDYEITNPPAKKAKIEEKPESEPAKRNSGETYITVSSEDDDEDGYNPYTL. The span at 547-562 shows a compositional bias: basic and acidic residues; that stretch reads AKIEEKPESEPAKRNS.

This sequence belongs to the DNA polymerase type-B-like family. In terms of assembly, component of the TRAMP complex (also called TRF4 complex) composed of at least HUL4, MTR4, PAP2/TRF4 and either AIR1 or AIR2. Interacts with NOP53 and POL2. Interacts directly with AIR2. Mg(2+) is required as a cofactor. Requires Mn(2+) as cofactor.

Its subcellular location is the nucleus. The enzyme catalyses RNA(n) + ATP = RNA(n)-3'-adenine ribonucleotide + diphosphate. Catalytic subunit of the TRAMP complex which has a poly(A) RNA polymerase activity and is involved in a post-transcriptional quality control mechanism limiting inappropriate expression of genetic information. Polyadenylation is required for the degradative activity of the exosome on several of its nuclear RNA substrates like cryptic transcripts generated by RNA polymerase II and III, or hypomethylated pre-tRNAi-Met. Polyadenylates RNA processing and degradation intermediates of snRNAs, snoRNAs and mRNAs that accumulate in strains lacking a functional exosome. TRF4 is also required for proper nuclear division in mitosis, DNA damage repair and sister chromatid cohesion. Involved in the regulation of histone mRNA levels. May mediate mitotic chromosome condensation. This is Poly(A) RNA polymerase protein 2 (PAP2) from Saccharomyces cerevisiae (strain ATCC 204508 / S288c) (Baker's yeast).